The chain runs to 419 residues: Interferon regulatory factor 3 (419 aa).

T3 bears the Phosphothreonine mark. A DNA-binding region (IRF tryptophan pentad repeat) is located at residues 5 to 111 (KPRILPWLVS…DPHKVYEFVT (107 aa)). S14 is subject to Phosphoserine. Residue T75 is modified to Phosphothreonine. S97, S123, and S135 each carry phosphoserine. The segment at 140–419 (PKLFDGLILG…DMDFQATGNI (280 aa)) is mediates interaction with ZDHHC11. K188 participates in a covalent cross-link: Glycyl lysine isopeptide (Lys-Gly) (interchain with G-Cter in ISG15). Positions 194–353 (EQWEFEVTAF…MWPQDQPWVK (160 aa)) are interaction with HERC5. Phosphothreonine occurs at positions 230, 237, and 246. Glycyl lysine isopeptide (Lys-Gly) (interchain with G-Cter in ISG15) cross-links involve residues K353 and K359. K359 is subject to N6-acetyllysine. S378 is modified (phosphoserine). Diphosphoserine is present on S379. S379 is subject to Phosphoserine; by TBK1. S388 carries the phosphoserine; by IKKE modification. Residue S390 is modified to Phosphoserine. The residue at position 396 (T396) is a Phosphothreonine.

The protein belongs to the IRF family. Monomer. Homodimer; phosphorylation-induced. Interacts (when phosphorylated) with CREBBP. Interacts with MAVS (via phosphorylated pLxIS motif). Interacts with TICAM1 (via phosphorylated pLxIS motif). Interacts with STING1 (via phosphorylated pLxIS motif). Interacts with IKBKE and TBK1. Interacts with TICAM2. Interacts with RBCK1. Interacts with HERC5. Interacts with DDX3X; the interaction allows the phosphorylation and activation of IRF3 by IKBKE. Interacts with TRIM21 and ULK1, in the presence of TRIM21; this interaction leads to IRF3 degradation by autophagy. Interacts with RIOK3; RIOK3 probably mediates the interaction of TBK1 with IRF3. Interacts with ILRUN; the interaction inhibits IRF3 binding to its DNA consensus sequence. Interacts with LYAR; this interaction impairs IRF3 DNA-binding activity. Interacts with TRAF3. Interacts with ZDHHC11; ZDHHC11 recruits IRF3 to STING1 upon DNA virus infection and thereby promotes IRF3 activation. Interacts with HSP90AA1; the interaction mediates IRF3 association with TOMM70. Interacts with BCL2; the interaction decreases upon Sendai virus infection. Interacts with BAX; the interaction is direct, increases upon virus infection and mediates the formation of the apoptosis complex TOMM70:HSP90AA1:IRF3:BAX. Interacts with DDX56. Interacts with NBR1. Post-translationally, constitutively phosphorylated on many Ser/Thr residues. Activated following phosphorylation by TBK1 and IKBKE. Innate adapter proteins, such as MAVS, STING1 or TICAM1, are first activated by viral RNA, cytosolic DNA, and bacterial lipopolysaccharide (LPS), respectively, leading to activation of the kinases TBK1 and IKBKE. These kinases then phosphorylate the adapter proteins on the pLxIS motif, leading to recruitment of IRF3, thereby licensing IRF3 for phosphorylation by TBK1. Phosphorylation at Ser-379 is followed by pyrophosphorylation at the same residue, promoting phosphorylation at Ser-388. Phosphorylated IRF3 dissociates from the adapter proteins, dimerizes, and then enters the nucleus to induce IFNs. In terms of processing, pyrophosphorylated by UAP1 following phosphorylation at Ser-379 by TBK1. Pyrophosphorylation promotes subsequent phosphorylation at Ser-388, leading to homodimerization of IRF3. Acetylation at Lys-359 by KAT8 inhibits recruimtent to promoters and transcription factor activity. Acetylation by KAT8 is promoted by phosphorylation at Ser-388. Post-translationally, ubiquitinated; ubiquitination involves RBCK1 leading to proteasomal degradation. Polyubiquitinated; ubiquitination involves TRIM21 leading to proteasomal degradation. Ubiquitinated by UBE3C, leading to its degradation. Deubiquitinated by USP5 on both 'Lys-48'-linked unanchored and 'Lys-63'-linked anchored polyubiquitin, leading to inhibition of anti-RNA viral innate immunity. In terms of processing, ISGylated by HERC5 resulting in sustained IRF3 activation and in the inhibition of IRF3 ubiquitination by disrupting PIN1 binding. The phosphorylation state of IRF3 does not alter ISGylation. Proteolytically cleaved by apoptotic caspases during apoptosis, leading to its inactivation. Cleavage by CASP3 during virus-induced apoptosis inactivates it, preventing cytokine overproduction.

It localises to the cytoplasm. The protein localises to the nucleus. Its subcellular location is the mitochondrion. Its activity is regulated as follows. In the absence of viral infection, maintained as a monomer in an autoinhibited state. Phosphorylation by TBK1 and IKBKE disrupts this autoinhibition leading to the liberation of the DNA-binding and dimerization activities and its nuclear localization where it can activate type I IFN and ISG genes. Phosphorylation and activation follow the following steps: innate adapter proteins, such as MAVS, STING1 or TICAM1, are first activated by viral RNA, cytosolic DNA and bacterial lipopolysaccharide (LPS), respectively, leading to activation of the kinases TBK1 and IKBKE. These kinases then phosphorylate the adapter proteins on their pLxIS motif, leading to recruitment of IRF3, thereby licensing IRF3 for phosphorylation by TBK1. Phosphorylated IRF3 dissociates from the adapter proteins, dimerizes, and then enters the nucleus to induce IFNs. Its function is as follows. Key transcriptional regulator of type I interferon (IFN)-dependent immune responses which plays a critical role in the innate immune response against DNA and RNA viruses. Regulates the transcription of type I IFN genes (IFN-alpha and IFN-beta) and IFN-stimulated genes (ISG) by binding to an interferon-stimulated response element (ISRE) in their promoters. Acts as a more potent activator of the IFN-beta (IFNB) gene than the IFN-alpha (IFNA) gene and plays a critical role in both the early and late phases of the IFNA/B gene induction. Found in an inactive form in the cytoplasm of uninfected cells and following viral infection, double-stranded RNA (dsRNA), or toll-like receptor (TLR) signaling, is phosphorylated by IKBKE and TBK1 kinases. This induces a conformational change, leading to its dimerization and nuclear localization and association with CREB binding protein (CREBBP) to form dsRNA-activated factor 1 (DRAF1), a complex which activates the transcription of the type I IFN and ISG genes. Can activate distinct gene expression programs in macrophages and can induce significant apoptosis in primary macrophages. In Mus musculus (Mouse), this protein is Interferon regulatory factor 3 (Irf3).